The primary structure comprises 444 residues: S-locus-specific glycoprotein BS29-1 (444 aa).

A signal peptide spans 1-28; it reads MRGVIPNYHHSYTLLFFVILVLFPHVFS. A Bulb-type lectin domain is found at 31–159; the sequence is TLSPNEALTI…KTTALDRFMW (129 aa). 5 N-linked (GlcNAc...) asparagine glycosylation sites follow: N43, N125, N180, N243, and N396. The PAN domain occupies 356–437; sequence CGEGDGFLRM…GGQDLYLKVA (82 aa). Disulfide bonds link C387–C412 and C395–C397.

Stigma.

Functionally, involved in sporophytic self-incompatibility system (the inability of flowering plants to achieve self-fertilization). The chain is S-locus-specific glycoprotein BS29-1 (SLSG) from Brassica oleracea var. alboglabra (Chinese kale).